A 345-amino-acid polypeptide reads, in one-letter code: Phosphoribosylformylglycinamidine cyclo-ligase (345 aa).

Belongs to the AIR synthase family.

It localises to the cytoplasm. It catalyses the reaction 2-formamido-N(1)-(5-O-phospho-beta-D-ribosyl)acetamidine + ATP = 5-amino-1-(5-phospho-beta-D-ribosyl)imidazole + ADP + phosphate + H(+). The protein operates within purine metabolism; IMP biosynthesis via de novo pathway; 5-amino-1-(5-phospho-D-ribosyl)imidazole from N(2)-formyl-N(1)-(5-phospho-D-ribosyl)glycinamide: step 2/2. The polypeptide is Phosphoribosylformylglycinamidine cyclo-ligase (Methanopyrus kandleri (strain AV19 / DSM 6324 / JCM 9639 / NBRC 100938)).